The chain runs to 169 residues: Ribosome maturation factor RimM (169 aa).

The 74-residue stretch at 94-167 folds into the PRC barrel domain; it reads ENEFYFHEII…KITIEVMEGL (74 aa).

Belongs to the RimM family. In terms of assembly, binds ribosomal protein uS19.

It localises to the cytoplasm. An accessory protein needed during the final step in the assembly of 30S ribosomal subunit, possibly for assembly of the head region. Essential for efficient processing of 16S rRNA. May be needed both before and after RbfA during the maturation of 16S rRNA. It has affinity for free ribosomal 30S subunits but not for 70S ribosomes. The polypeptide is Ribosome maturation factor RimM (Listeria welshimeri serovar 6b (strain ATCC 35897 / DSM 20650 / CCUG 15529 / CIP 8149 / NCTC 11857 / SLCC 5334 / V8)).